We begin with the raw amino-acid sequence, 280 residues long: Transcription factor MYB60 (280 aa).

HTH myb-type domains follow at residues 9–65 (KIGI…RPGI) and 66–116 (KRGN…KKKL). DNA-binding regions (H-T-H motif) lie at residues 37–61 (WRSV…TNYL) and 89–112 (WASI…NTHL). Cysteine 49 and cysteine 53 each carry S-nitrosocysteine. The span at 118–127 (KSDSDERSRS) shows a compositional bias: basic and acidic residues. Disordered stretches follow at residues 118–149 (KSDS…TYAS) and 204–247 (EEGH…NATP). Residues 128 to 149 (ENIALQTSSTRNTINHRSTYAS) show a composition bias toward polar residues.

As to expression, specifically expressed in guard cells. Present in seedlings, leaves, stems and flowers.

It localises to the nucleus. Functionally, transcription factor involved in the regulation of gene (e.g. drought-regulated and flavonoid biosynthetic genes) expression and stomatal movements leading to negative regulation of responses to drought and responses to other physiological stimuli (e.g. light). Promotes guard cell deflation in response to water deficit. Triggers root growth upon osmotic stress (e.g. mannitol containing medium). The polypeptide is Transcription factor MYB60 (Arabidopsis thaliana (Mouse-ear cress)).